The following is a 104-amino-acid chain: Replication restart protein PriB (104 aa).

Positions 1–101 (MTNRLVLSGT…LHAEQIELID (101 aa)) constitute an SSB domain.

The protein belongs to the PriB family. As to quaternary structure, homodimer. Interacts with PriA and DnaT. Component of the replication restart primosome. Primosome assembly occurs via a 'hand-off' mechanism. PriA binds to replication forks, subsequently PriB then DnaT bind; DnaT then displaces ssDNA to generate the helicase loading substrate.

In terms of biological role, involved in the restart of stalled replication forks, which reloads the replicative helicase on sites other than the origin of replication; the PriA-PriB pathway is the major replication restart pathway. During primosome assembly it facilitates complex formation between PriA and DnaT on DNA; stabilizes PriA on DNA. Stimulates the DNA unwinding activity of PriA helicase. This chain is Replication restart protein PriB, found in Shigella dysenteriae serotype 1 (strain Sd197).